A 116-amino-acid chain; its full sequence is Large ribosomal subunit protein bL20 (116 aa).

It belongs to the bacterial ribosomal protein bL20 family.

Functionally, binds directly to 23S ribosomal RNA and is necessary for the in vitro assembly process of the 50S ribosomal subunit. It is not involved in the protein synthesizing functions of that subunit. The sequence is that of Large ribosomal subunit protein bL20 (rplT) from Mycoplasmopsis fermentans (Mycoplasma fermentans).